A 718-amino-acid chain; its full sequence is Polyribonucleotide nucleotidyltransferase (718 aa).

Asp497 and Asp503 together coordinate Mg(2+). The region spanning 564-623 (PRLLTMRIDPDMIGLVIGPGGKTVKSITEQTKTKIDIDDDGTVTISASEAEQAERAKQLI) is the KH domain. Residues 633 to 701 (GEVYVGRVTR…NKGRLNLTRL (69 aa)) enclose the S1 motif domain.

Belongs to the polyribonucleotide nucleotidyltransferase family. Requires Mg(2+) as cofactor.

The protein resides in the cytoplasm. It carries out the reaction RNA(n+1) + phosphate = RNA(n) + a ribonucleoside 5'-diphosphate. Functionally, involved in mRNA degradation. Catalyzes the phosphorolysis of single-stranded polyribonucleotides processively in the 3'- to 5'-direction. The protein is Polyribonucleotide nucleotidyltransferase of Gloeothece citriformis (strain PCC 7424) (Cyanothece sp. (strain PCC 7424)).